A 379-amino-acid chain; its full sequence is Probable G-protein coupled receptor No18 (379 aa).

Topologically, residues 5–36 (EASITGRTAPELNASAAPLDDERELGETVAAT) are extracellular. Asn-17 is a glycosylation site (N-linked (GlcNAc...) asparagine). The chain crosses the membrane as a helical span at residues 37–58 (ALLLAIILVTIVGNSLVIISVF). The Cytoplasmic portion of the chain corresponds to 59-68 (TYRPLRSVQN). A helical membrane pass occupies residues 69–90 (FFVVSLAVADLTVALFVLPLNV). The Extracellular portion of the chain corresponds to 91-107 (AYRLLNQWLLGSYLCQM). The cysteines at positions 105 and 184 are disulfide-linked. The helical transmembrane segment at 108–128 (WLTCDILCCTSSILNLCVIAL) threads the bilayer. The Cytoplasmic segment spans residues 129–148 (DRYWAITDPINYAQKRTIRR). The helical transmembrane segment at 149-171 (VNTMIAAVWALSLVISVPPLLGW) threads the bilayer. The Extracellular portion of the chain corresponds to 172–196 (NDWPAQFTEDTPCTLTQERLFVVYS). The helical transmembrane segment at 197–218 (SSGSFFIPLIIMSVVYAKIFFA) threads the bilayer. Residues 219–303 (TKRRLRERTR…LSKERKAARV (85 aa)) are Cytoplasmic-facing. Positions 234–276 (AVPAPPQRTSSRPLAELESVASQEDETEPSPEPEPLSSRADKP) are disordered. The chain crosses the membrane as a helical span at residues 304–325 (LGVIMGVFVVCWLPFFLMYAIV). At 326-340 (PFCTNCAPPSQRVVD) the chain is on the extracellular side. Residues 341–362 (FVTWLGYVNSSLNPIIYTIYNK) form a helical membrane-spanning segment. At 363–375 (DFRTAFSRLLRCD) the chain is on the cytoplasmic side.

This sequence belongs to the G-protein coupled receptor 1 family.

It localises to the cell membrane. In terms of biological role, probable G-protein coupled receptor for an amine. In Amphibalanus amphitrite (Striped barnacle), this protein is Probable G-protein coupled receptor No18.